Consider the following 246-residue polypeptide: Transcription factor A, mitochondrial (246 aa).

A mitochondrion-targeting transit peptide spans 1-42 (MAFLRSMWGVLSALGRSGAAVCIGCGSRLRSPFSFVYLPKCF). Positions 50 to 118 (PKKPVSSYLR…VYKEKISRFK (69 aa)) form a DNA-binding region, HMG box 1. A phosphoserine; by PKA mark is found at serine 55, serine 56, and serine 61. Threonine 122 is subject to Phosphothreonine. Residues 155 to 219 (PKRPRSAYNV…RYHNEMKSWE (65 aa)) constitute a DNA-binding region (HMG box 2). Serine 160 is subject to Phosphoserine; by PKA. A phosphoserine mark is found at serine 193 and serine 195.

In terms of assembly, monomer; binds DNA as a monomer. Homodimer. Component of the mitochondrial transcription initiation complex, composed at least of TFB2M, TFAM and POLRMT. In this complex TFAM recruits POLRMT to the promoter whereas TFB2M induces structural changes in POLRMT to enable promoter opening and trapping of the DNA non-template strand. Upon metabolic stress, forms a complex composed of FOXO3, SIRT3, TFAM and POLRMT. Interacts with TFB1M and TFB2M. Interacts with CLPX; this enhances DNA-binding. In terms of processing, phosphorylation by PKA within the HMG box 1 impairs DNA binding and promotes degradation by the AAA+ Lon protease.

It is found in the mitochondrion. The protein resides in the mitochondrion matrix. The protein localises to the mitochondrion nucleoid. Binds to the mitochondrial light strand promoter and functions in mitochondrial transcription regulation. Component of the mitochondrial transcription initiation complex, composed at least of TFB2M, TFAM and POLRMT that is required for basal transcription of mitochondrial DNA. In this complex, TFAM recruits POLRMT to a specific promoter whereas TFB2M induces structural changes in POLRMT to enable promoter opening and trapping of the DNA non-template strand. Required for accurate and efficient promoter recognition by the mitochondrial RNA polymerase. Promotes transcription initiation from the HSP1 and the light strand promoter by binding immediately upstream of transcriptional start sites. Is able to unwind DNA. Bends the mitochondrial light strand promoter DNA into a U-turn shape via its HMG boxes. Required for maintenance of normal levels of mitochondrial DNA. May play a role in organizing and compacting mitochondrial DNA. This chain is Transcription factor A, mitochondrial, found in Trachypithecus cristatus (Silvered leaf-monkey).